The following is an 80-amino-acid chain: Growth factor (80 aa).

Residues 1 to 19 (MATRNLVASLLCIMYAVHA) form the signal peptide. Residues 29 to 73 (HVKVCNHDYENYCLNNGTCFTIALDNVSITPFCVCRINYEGSRCQ) form the EGF-like domain. 3 disulfides stabilise this stretch: Cys33-Cys47, Cys41-Cys61, and Cys63-Cys72. N-linked (GlcNAc...) asparagine; by host glycosylation is found at Asn44 and Asn54.

The protein resides in the secreted. This chain is Growth factor, found in Oryctolagus cuniculus (Rabbit).